The sequence spans 117 residues: Small ribosomal subunit protein bS6 (117 aa).

Residues 97 to 117 are disordered; it reads TEEPSAILTKKDDRRGRRERN.

It belongs to the bacterial ribosomal protein bS6 family.

Functionally, binds together with bS18 to 16S ribosomal RNA. The chain is Small ribosomal subunit protein bS6 from Maricaulis maris (strain MCS10) (Caulobacter maris).